Here is a 493-residue protein sequence, read N- to C-terminus: uncharacterized protein (493 aa).

FAD is bound at residue 8-37; it reads DFLVVGGGTCGCVVAARLSEDPSATVMLLE. Catalysis depends on histidine 429, which acts as the Proton acceptor.

This sequence belongs to the GMC oxidoreductase family. The cofactor is FAD.

This is an uncharacterized protein from Rhodococcus erythropolis (Arthrobacter picolinophilus).